Reading from the N-terminus, the 158-residue chain is 2-C-methyl-D-erythritol 2,4-cyclodiphosphate synthase (158 aa).

A divalent metal cation is bound by residues Asp9 and His11. 4-CDP-2-C-methyl-D-erythritol 2-phosphate-binding positions include 9-11 (DVH) and 35-36 (HS). His43 lines the a divalent metal cation pocket. Residues 57-59 (DIG), 62-66 (FPDTD), 133-136 (TTTE), Phe140, and Arg143 each bind 4-CDP-2-C-methyl-D-erythritol 2-phosphate.

Belongs to the IspF family. Homotrimer. A divalent metal cation is required as a cofactor.

It carries out the reaction 4-CDP-2-C-methyl-D-erythritol 2-phosphate = 2-C-methyl-D-erythritol 2,4-cyclic diphosphate + CMP. It participates in isoprenoid biosynthesis; isopentenyl diphosphate biosynthesis via DXP pathway; isopentenyl diphosphate from 1-deoxy-D-xylulose 5-phosphate: step 4/6. Involved in the biosynthesis of isopentenyl diphosphate (IPP) and dimethylallyl diphosphate (DMAPP), two major building blocks of isoprenoid compounds. Catalyzes the conversion of 4-diphosphocytidyl-2-C-methyl-D-erythritol 2-phosphate (CDP-ME2P) to 2-C-methyl-D-erythritol 2,4-cyclodiphosphate (ME-CPP) with a corresponding release of cytidine 5-monophosphate (CMP). The polypeptide is 2-C-methyl-D-erythritol 2,4-cyclodiphosphate synthase (Geobacillus kaustophilus (strain HTA426)).